Consider the following 374-residue polypeptide: N-acetyldiaminopimelate deacetylase (374 aa).

The active site involves D69. E128 acts as the Proton acceptor in catalysis.

The protein belongs to the peptidase M20A family. N-acetyldiaminopimelate deacetylase subfamily.

It carries out the reaction N-acetyl-(2S,6S)-2,6-diaminopimelate + H2O = (2S,6S)-2,6-diaminopimelate + acetate. Its pathway is amino-acid biosynthesis; L-lysine biosynthesis via DAP pathway; LL-2,6-diaminopimelate from (S)-tetrahydrodipicolinate (acetylase route): step 3/3. Functionally, catalyzes the conversion of N-acetyl-diaminopimelate to diaminopimelate and acetate. The polypeptide is N-acetyldiaminopimelate deacetylase (Bacillus velezensis (strain DSM 23117 / BGSC 10A6 / LMG 26770 / FZB42) (Bacillus amyloliquefaciens subsp. plantarum)).